The chain runs to 258 residues: Thiazole synthase 2 (258 aa).

Lysine 97 (schiff-base intermediate with DXP) is an active-site residue. Residues glycine 158, 184-185, and 206-207 contribute to the 1-deoxy-D-xylulose 5-phosphate site; these read AG and NT.

It belongs to the ThiG family. As to quaternary structure, homotetramer. Forms heterodimers with either ThiH or ThiS.

Its subcellular location is the cytoplasm. It catalyses the reaction [ThiS sulfur-carrier protein]-C-terminal-Gly-aminoethanethioate + 2-iminoacetate + 1-deoxy-D-xylulose 5-phosphate = [ThiS sulfur-carrier protein]-C-terminal Gly-Gly + 2-[(2R,5Z)-2-carboxy-4-methylthiazol-5(2H)-ylidene]ethyl phosphate + 2 H2O + H(+). Its pathway is cofactor biosynthesis; thiamine diphosphate biosynthesis. Functionally, catalyzes the rearrangement of 1-deoxy-D-xylulose 5-phosphate (DXP) to produce the thiazole phosphate moiety of thiamine. Sulfur is provided by the thiocarboxylate moiety of the carrier protein ThiS. In vitro, sulfur can be provided by H(2)S. This is Thiazole synthase 2 from Syntrophotalea carbinolica (strain DSM 2380 / NBRC 103641 / GraBd1) (Pelobacter carbinolicus).